Here is a 1394-residue protein sequence, read N- to C-terminus: Tubulin glycylase 3E (1394 aa).

4 disordered regions span residues 201-230, 563-582, 620-663, and 682-706; these read KKKS…QRKE, NQKD…QNSI, DENE…TSNF, and STVK…NLKE. The span at 205-216 shows a compositional bias: low complexity; it reads NFQNKSQSQLNN. The segment covering 217-230 has biased composition (basic and acidic residues); that stretch reads HKNEEKKPSQQRKE. Residues 568–582 show a composition bias toward low complexity; that stretch reads QSNQTSSVISQQNSI. Over residues 627–655 the composition is skewed to polar residues; sequence KENVLQQKKNQSNQIVTSQQQSNNYFKQE. Low complexity predominate over residues 682 to 703; sequence STVKNSDNNNQNQTNPQNQNTN. The region spanning 911–1250 is the TTL domain; the sequence is RFIFNITVIA…QNNLQEDLEI (340 aa). ATP is bound by residues 1058–1061, Lys-1079, and Asp-1081; that span reads QKYI. 2 consecutive IQ domains span residues 1320-1349 and 1348-1377; these read QYWG…QKFT and FTFA…QQQT.

Its subcellular location is the cell projection. The protein resides in the cilium. It localises to the cytoplasm. The protein localises to the cytoskeleton. It is found in the cilium axoneme. Its function is as follows. Probable glycylase which modifies tubulin, generating side chains of glycine on the gamma-carboxyl groups of specific glutamate residues within the C-terminal tail of tubulin. This chain is Tubulin glycylase 3E (TTLL3E), found in Tetrahymena thermophila (strain SB210).